The chain runs to 118 residues: Basic phospholipase A2 nigexine (118 aa).

7 disulfide bridges follow: Cys11–Cys70, Cys26–Cys117, Cys28–Cys44, Cys43–Cys98, Cys50–Cys91, Cys59–Cys84, and Cys77–Cys89. Ca(2+) is bound by residues Tyr27, Gly29, and Gly31. His47 is an active-site residue. A Ca(2+)-binding site is contributed by Asp48. The Coagulation factor Xa binding motif signature appears at 52–69 (EKAGKMGCWPYFTLYKYK). Asp92 is a catalytic residue.

This sequence belongs to the phospholipase A2 family. Group I subfamily. D49 sub-subfamily. The cofactor is Ca(2+). In terms of tissue distribution, expressed by the venom gland.

The protein localises to the secreted. It catalyses the reaction a 1,2-diacyl-sn-glycero-3-phosphocholine + H2O = a 1-acyl-sn-glycero-3-phosphocholine + a fatty acid + H(+). Functionally, snake venom phospholipase A2 (PLA2) that shows anticoagulant activity, has cytotoxic activity and affects neuromuscular transmission in vitro. PLA2 catalyzes the calcium-dependent hydrolysis of the 2-acyl groups in 3-sn-phosphoglycerides. This is Basic phospholipase A2 nigexine from Naja pallida (Red spitting cobra).